A 429-amino-acid chain; its full sequence is Carbamoyl phosphate synthase arginine-specific small chain (429 aa).

Residues 1–20 (MIRVIQPPLIASKQLFRRYL) constitute a mitochondrion transit peptide. The 189-residue stretch at 218-406 (HIAVLDCGAK…FENIEQYRAT (189 aa)) folds into the Glutamine amidotransferase type-1 domain. Cys-295 acts as the Nucleophile in catalysis. Residues His-379 and Glu-381 contribute to the active site.

This sequence belongs to the CarA family. Heterodimer composed of 2 chains; the small (or glutamine) chain promotes the hydrolysis of glutamine to ammonia, which is used by the large (or ammonia) chain to synthesize carbamoyl phosphate.

Its subcellular location is the mitochondrion matrix. It carries out the reaction hydrogencarbonate + L-glutamine + 2 ATP + H2O = carbamoyl phosphate + L-glutamate + 2 ADP + phosphate + 2 H(+). It catalyses the reaction L-glutamine + H2O = L-glutamate + NH4(+). It functions in the pathway amino-acid biosynthesis; L-arginine biosynthesis; carbamoyl phosphate from bicarbonate: step 1/1. In terms of biological role, small subunit of the arginine-specific carbamoyl phosphate synthase (CPSase). CPSase catalyzes the formation of carbamoyl phosphate from the ammonia moiety of glutamine, carbonate, and phosphate donated by ATP, the first step of the arginine biosynthetic pathway. The small subunit (glutamine amidotransferase) binds and cleaves glutamine to supply the large subunit with the substrate ammonia. This chain is Carbamoyl phosphate synthase arginine-specific small chain (CPA1), found in Debaryomyces hansenii (strain ATCC 36239 / CBS 767 / BCRC 21394 / JCM 1990 / NBRC 0083 / IGC 2968) (Yeast).